A 335-amino-acid chain; its full sequence is tRNA N6-adenosine threonylcarbamoyltransferase (335 aa).

The Fe cation site is built by His-111 and His-115. Substrate is bound by residues 133–137 (IISGG), Asp-166, Gly-179, Asp-183, and Asn-268. Fe cation is bound at residue Asp-296.

Belongs to the KAE1 / TsaD family. Fe(2+) serves as cofactor.

It is found in the cytoplasm. It catalyses the reaction L-threonylcarbamoyladenylate + adenosine(37) in tRNA = N(6)-L-threonylcarbamoyladenosine(37) in tRNA + AMP + H(+). Its function is as follows. Required for the formation of a threonylcarbamoyl group on adenosine at position 37 (t(6)A37) in tRNAs that read codons beginning with adenine. Is involved in the transfer of the threonylcarbamoyl moiety of threonylcarbamoyl-AMP (TC-AMP) to the N6 group of A37, together with TsaE and TsaB. TsaD likely plays a direct catalytic role in this reaction. This is tRNA N6-adenosine threonylcarbamoyltransferase from Aquifex aeolicus (strain VF5).